Here is a 1167-residue protein sequence, read N- to C-terminus: MRLSTIKLSGFKSFVDPTTLHLPTNMTGIVGPNGCGKSNIIDAVRWVMGESSASRLRGDSLTDVIFSGSSARKPVSQATVELIFDNSDHTISGEFASFNEISVKRLVSRDGNSAYYLNGTKCRRRDITDLFLGTGLGPRSYSIIEQGMISQIIEARPEDLRVYLEEAAGISKYKERRKETETRIRHTRENLDRLGDLREEITKQLAHLQRQARQAEQYQALQEERRIKDAEWKALEYRGLDGQLQGLREKLNQEETRLQQFIAEQRDAEARIETGRVRREESAEAVAKAQADVYQVGGALARIEQQIQHQRELSHRLHKARDEAQSQLQELTQHISGDSAKLSVLREAVAAAEPQLEQLREDHEFRQESLREAEARLADWQQRWETHNRDTGEASRAGEVERTRVDYLDRQALEADRRREALVNERAGLDLDALAEAFEQIELRHETQKTSLDGLTEQVEARKHALGGLQEQQRASQGELAEVRKQAQAARGRLSSLETLQQAALGQEQGAAVAWLKSRGLDSAARVGERISVQSGWENAVEGALGQLIEGVLVDAPEQLVDALGELGDGRIALVSSATDNANFAPTSLAAKVQGPIAIRRLLARLHTAEDLDAARTLQRSLPEGDSVITRNGERLGEGWVRVSRSGAAKQGALLRERQIQELRTQIETLQEREAELEHQLASFREQLLAAEQQREDAQRQLYMAHRSVSELAGQLQSQQGKVDAARTRIERIETDLSQLLETLDTSREQAREARAKLEDAVTLMGDLQGTREALESERRQLTDARDQARDAARGVRDAMHALALTLESQRTQIASLSQTLERMDSQRGQLDTRLEDLVAQLSEGDSPVETLEHEHQAALSERVRTERALGEARTLLDSIDSELRSFEQTRQQRDEQALAQRERISQRKLDQQALVLSAEQLSAAVVKAGFVLEDVVNGLPESANPAEWEATVGQIDGRMRRLEPVNLAAIQEYGEAAQRSEYLDAQNLDLNTALETLEEAIRKIDRETRGRFKDTFDRVNSGVQALYPRLFGGGHAYLELTGEDLLDTGVTIMARPPGKRVSSISLLSGGEKAMTAVALVFAIFQLNPAPFCLLDEVDAPLDEANVGRLANMVREMSEKVQFLFVSHNKATMEAARQLSGVTMREPGVSRLVSVDLEEAARLAGAA.

Residue 32 to 39 (PNGCGKSN) participates in ATP binding. Coiled coils occupy residues 170–274 (ISKY…RIET), 310–390 (QREL…HNRD), 468–500 (GLQE…LETL), 653–870 (ALLR…ERAL), and 982–1011 (EYLD…ETRG).

Belongs to the SMC family. Homodimer.

The protein localises to the cytoplasm. Required for chromosome condensation and partitioning. The protein is Chromosome partition protein Smc of Xanthomonas oryzae pv. oryzae (strain KACC10331 / KXO85).